The primary structure comprises 208 residues: Methylthioribulose-1-phosphate dehydratase (208 aa).

Residues His96 and His98 each contribute to the Zn(2+) site.

This sequence belongs to the aldolase class II family. MtnB subfamily. Zn(2+) is required as a cofactor.

It catalyses the reaction 5-(methylsulfanyl)-D-ribulose 1-phosphate = 5-methylsulfanyl-2,3-dioxopentyl phosphate + H2O. The protein operates within amino-acid biosynthesis; L-methionine biosynthesis via salvage pathway; L-methionine from S-methyl-5-thio-alpha-D-ribose 1-phosphate: step 2/6. Catalyzes the dehydration of methylthioribulose-1-phosphate (MTRu-1-P) into 2,3-diketo-5-methylthiopentyl-1-phosphate (DK-MTP-1-P). The polypeptide is Methylthioribulose-1-phosphate dehydratase (Pseudomonas fluorescens (strain Pf0-1)).